Reading from the N-terminus, the 389-residue chain is MNTAVNVNVVHESEAQRQFARVKLPARIRYIGANREGVDARLLDLSAGGFAFTASGAPIQPGDLYKGKLLFQVDSISFSLEVEFQVRSVDPASRRVGCEFQNLKPREVAALRYLITSYLAGEVIGVGDMLNTLQRENFTKARKQGGGNGGMGFFGRVRAVTLSTAIFVVGVGAFAFILNQMYNLYFVTHADSGVVSVPNQQITMPREGTVQSLLGPNAEVAKGAPIATFSANLLDMLKGNLTEEQLNPGNIEKLFGHQMKGTLTSPCDCRVVQQLVADGQYANKGQVIFTLAPRDSVASIEARFPYRNAAELAPGTRVNFQVAGDGVNRSGRIVNTAPVDGDLSSEIRVQIQPDQPLDAQYAGRPAEVSIGGLPGRTLLNKAVTLATAR.

Residues 16 to 116 enclose the PilZ domain; it reads QRQFARVKLP…EVAALRYLIT (101 aa).

It belongs to the Alg44 family.

Its subcellular location is the periplasm. The enzyme catalyses [(1-&gt;4)-beta-D-mannuronosyl](n) + GDP-alpha-D-mannuronate = [(1-&gt;4)-beta-D-mannuronosyl](n+1) + GDP + H(+). It functions in the pathway glycan biosynthesis; alginate biosynthesis. Functionally, required for alginate biosynthesis. The protein is Mannuronan synthase (alg44) of Pseudomonas aeruginosa (strain ATCC 15692 / DSM 22644 / CIP 104116 / JCM 14847 / LMG 12228 / 1C / PRS 101 / PAO1).